The chain runs to 370 residues: Queuine tRNA-ribosyltransferase (370 aa).

Asp89 (proton acceptor) is an active-site residue. Substrate contacts are provided by residues 89–93 (DSGGF), Asp143, Gln185, and Gly212. Residues 243 to 249 (GVGTPED) form an RNA binding region. The Nucleophile role is filled by Asp262. Positions 267–271 (TRNAR) are RNA binding; important for wobble base 34 recognition. Zn(2+)-binding residues include Cys300, Cys302, Cys305, and His331.

This sequence belongs to the queuine tRNA-ribosyltransferase family. Homodimer. Within each dimer, one monomer is responsible for RNA recognition and catalysis, while the other monomer binds to the replacement base PreQ1. Requires Zn(2+) as cofactor.

The catalysed reaction is 7-aminomethyl-7-carbaguanine + guanosine(34) in tRNA = 7-aminomethyl-7-carbaguanosine(34) in tRNA + guanine. Its pathway is tRNA modification; tRNA-queuosine biosynthesis. Functionally, catalyzes the base-exchange of a guanine (G) residue with the queuine precursor 7-aminomethyl-7-deazaguanine (PreQ1) at position 34 (anticodon wobble position) in tRNAs with GU(N) anticodons (tRNA-Asp, -Asn, -His and -Tyr). Catalysis occurs through a double-displacement mechanism. The nucleophile active site attacks the C1' of nucleotide 34 to detach the guanine base from the RNA, forming a covalent enzyme-RNA intermediate. The proton acceptor active site deprotonates the incoming PreQ1, allowing a nucleophilic attack on the C1' of the ribose to form the product. After dissociation, two additional enzymatic reactions on the tRNA convert PreQ1 to queuine (Q), resulting in the hypermodified nucleoside queuosine (7-(((4,5-cis-dihydroxy-2-cyclopenten-1-yl)amino)methyl)-7-deazaguanosine). In Methylobacillus flagellatus (strain ATCC 51484 / DSM 6875 / VKM B-1610 / KT), this protein is Queuine tRNA-ribosyltransferase.